A 150-amino-acid polypeptide reads, in one-letter code: MVKTNTNKLTDDQISEIKESFDMFKSDNGKLDNDQIKYAFKALGCEITEETLELIKKKGQKSISFNSFFELVSPYIPKRDSMSTLEQAFKLFVKDGSGITFKDLKKVAINIGEECSDSDLYDMIEFADTDGDGVINKSEFISLMTTKKVL.

EF-hand domains lie at 12-46 (DQIS…LGCE), 80-114 (DSMS…IGEE), and 115-150 (CSDS…KKVL). Ca(2+) is bound by residues Asp128, Asp130, Asp132, and Glu139.

The protein belongs to the centrin family.

The protein resides in the cytoplasm. It is found in the cytoskeleton. The protein localises to the microtubule organizing center. It localises to the centrosome. In terms of biological role, plays a fundamental role in microtubule-organizing center structure and function. The sequence is that of Centrin-B (cenB) from Dictyostelium discoideum (Social amoeba).